A 1649-amino-acid chain; its full sequence is Cortactin-binding protein 2 (1649 aa).

Residues Met-1–Ala-27 form a disordered region. Residues Ala-15–Glu-25 are compositionally biased toward low complexity. The stretch at Arg-118–Lys-275 forms a coiled coil. 3 disordered regions span residues Pro-322 to Asn-439, Gly-451 to Arg-476, and Ala-492 to Lys-604. Polar residues predominate over residues Ser-330–Gly-342. Residues Ser-395 to Gln-416 show a composition bias toward low complexity. Polar residues predominate over residues Ala-492–Ala-503. Residue Arg-495 is modified to Asymmetric dimethylarginine. 6 ANK repeats span residues Gly-699 to Tyr-729, Asp-733 to Ala-762, Asn-766 to His-795, Gly-799 to Ile-828, Asp-832 to Gly-861, and Glu-901 to Arg-931. Residues Ser-1438 to Arg-1471 form a disordered region. Ser-1510 is subject to Phosphoserine. The disordered stretch occupies residues Lys-1527–Lys-1649. Residues Ser-1528–Asp-1546 show a composition bias toward basic and acidic residues. 3 stretches are compositionally biased toward polar residues: residues Ser-1547 to Pro-1557, Pro-1571 to Lys-1584, and Asn-1621 to Asn-1630. Residues Ser-1631–Lys-1649 show a composition bias toward basic and acidic residues.

Interacts with CTTN/cortactin SH3 domain. Interacts with STRN, STRN4/zinedin and MOB4/phocein; this interactions mediate the association with the STRIPAK core complex and may regulate dendritic spine distribution of the STRIPAK complex in hippocampal neurons. Activation of glutamate receptors weakens the interaction with STRN and STRN4.

The protein localises to the cytoplasm. The protein resides in the cell cortex. It is found in the cell projection. It localises to the dendritic spine. In terms of biological role, regulates the dendritic spine distribution of CTTN/cortactin in hippocampal neurons, and thus controls dendritic spinogenesis and dendritic spine maintenance. Associates with the striatin-interacting phosphatase and kinase (STRIPAK) core complex to regulate dendritic spine distribution of the STRIPAK complex in hippocampal neurons. In Rattus norvegicus (Rat), this protein is Cortactin-binding protein 2 (Cttnbp2).